The sequence spans 2919 residues: Cadherin EGF LAG seven-pass G-type receptor 2 (2919 aa).

Positions M1–G31 are cleaved as a signal peptide. The Extracellular portion of the chain corresponds to D32–T2380. Residues L156–Q194 are disordered. The segment covering V175 to Q194 has biased composition (polar residues). Cadherin domains are found at residues Q182–F289, E290–F399, S400–F505, V506–F610, T611–F712, Q713–F815, L816–F921, E922–L1023, and I1028–L1146. N-linked (GlcNAc...) asparagine glycosylation is found at N486, N557, and N701. Residues N1036, N1076, N1182, and N1212 are each glycosylated (N-linked (GlcNAc...) asparagine). One can recognise an EGF-like 1; atypical domain in the interval D1228–E1286. Residues E1288–Y1318 form the EGF-like 2; calcium-binding domain. 6 cysteine pairs are disulfide-bonded: C1292-C1303, C1297-C1312, C1314-C1323, C1332-C1343, C1337-C1353, and C1355-C1365. Residues H1328–Q1366 form the EGF-like 3; calcium-binding domain. The 205-residue stretch at V1367–C1571 folds into the Laminin G-like 1 domain. N-linked (GlcNAc...) asparagine glycosylation is found at N1501 and N1565. 4 disulfides stabilise this stretch: C1545-C1571, C1578-C1589, C1583-C1598, and C1600-C1609. The EGF-like 4; calcium-binding domain maps to K1574–A1610. Position 1591 is a (3R)-3-hydroxyasparagine (N1591). One can recognise a Laminin G-like 2 domain in the interval A1614–C1791. N-linked (GlcNAc...) asparagine glycosylation is present at N1741. The EGF-like 5; calcium-binding domain maps to V1787–T1829. 13 cysteine pairs are disulfide-bonded: C1791–C1802, C1797–C1817, C1819–C1828, C1832–C1843, C1837–C1855, C1857–C1866, C1887–C1899, C1889–C1906, C1908–C1921, C1924–C1936, C1926–C1943, C1945–C1954, and C1957–C1969. A glycan (N-linked (GlcNAc...) asparagine) is linked at N1827. Positions N1830–E1867 constitute an EGF-like 6; calcium-binding domain. The region spanning T1883–L1922 is the EGF-like 7; calcium-binding domain. A glycan (N-linked (GlcNAc...) asparagine) is linked at N1900. Positions C1924 to V1971 constitute a Laminin EGF-like domain. Residues N2024, N2043, and N2061 are each glycosylated (N-linked (GlcNAc...) asparagine). The 171-residue stretch at E2199–E2369 folds into the GAIN-B domain. Positions V2216–S2241 are disordered. 2 disulfide bridges follow: C2319/C2351 and C2339/C2353. The tract at residues C2319 to E2369 is GPS. N2323 and N2345 each carry an N-linked (GlcNAc...) asparagine glycan. Residues Y2381 to L2401 form a helical membrane-spanning segment. The Cytoplasmic portion of the chain corresponds to R2402 to R2413. A helical membrane pass occupies residues N2414–A2433. Topologically, residues D2434 to A2438 are extracellular. Residues C2439–L2459 form a helical membrane-spanning segment. Over E2460 to R2480 the chain is Cytoplasmic. Residues F2481–D2501 traverse the membrane as a helical segment. Topologically, residues P2502–T2518 are extracellular. Residues L2519–I2539 traverse the membrane as a helical segment. Residues L2540–R2563 are Cytoplasmic-facing. The helical transmembrane segment at S2564–N2584 threads the bilayer. Residues S2585–H2591 lie on the Extracellular side of the membrane. The chain crosses the membrane as a helical span at residues Y2592 to L2612. The Cytoplasmic portion of the chain corresponds to S2613–H2919. A disordered region spans residues L2690–L2884. Residues T2718 to Q2730 are compositionally biased toward acidic residues. The segment covering G2791–S2800 has biased composition (polar residues). A compositionally biased stretch (basic and acidic residues) spans L2803–T2815. Over residues G2857–E2868 the composition is skewed to low complexity.

It belongs to the G-protein coupled receptor 2 family. LN-TM7 subfamily. In terms of assembly, heterodimer of 2 chains generated by proteolytic processing; the large extracellular N-terminal fragment and the membrane-bound C-terminal fragment predominantly remain associated and non-covalently linked. Post-translationally, the iron and 2-oxoglutarate dependent 3-hydroxylation of aspartate and asparagine is (R) stereospecific within EGF domains. Autoproteolytically processed at the GPS region of the GAIN-B domain; this cleavage modulates receptor activity. In terms of tissue distribution, expressed in the CNS and in the eye.

The protein localises to the cell membrane. Its function is as follows. Receptor that may have an important role in cell/cell signaling during nervous system formation. The chain is Cadherin EGF LAG seven-pass G-type receptor 2 from Mus musculus (Mouse).